A 401-amino-acid polypeptide reads, in one-letter code: Calreticulin (401 aa).

Residues 1 to 18 (MRKELWLGLLLSSQAVLS) form the signal peptide. An intrachain disulfide couples C103 to C134. An alpha-D-glucoside contacts are provided by Y107, K109, Y125, and D132. Repeat copies occupy residues 187–198 (KESGTLEEDWEI), 206–217 (DPEDKKPADWVD), 223–234 (DPEDKKPEDWDK), 241–252 (DPDATQPDDWDE), 256–266 (GKWEAPMISNP), 270–280 (GEWKAKKIPNP), and 284–294 (GVWKPRDIPNP). A 4 X approximate repeats region spans residues 187–252 (KESGTLEEDW…DATQPDDWDE (66 aa)). Basic and acidic residues-rich tracts occupy residues 199–214 (LKPKTIPDPEDKKPAD) and 224–236 (PEDKKPEDWDKEP). Positions 199–263 (LKPKTIPDPE…EDGKWEAPMI (65 aa)) are disordered. The segment covering 246 to 256 (QPDDWDEEEDG) has biased composition (acidic residues). The tract at residues 256–294 (GKWEAPMISNPKYKGEWKAKKIPNPAYKGVWKPRDIPNP) is 3 X approximate repeats. D314 contacts an alpha-D-glucoside. The tract at residues 341-401 (DQTNGATKDA…EEEDDKKDEL (61 aa)) is disordered. Positions 348–381 (KDAEKKAFDSAEADKRKKEEDERKKQEEEEKKTA) are enriched in basic and acidic residues. The span at 382-401 (EEDEDDDDEEEEEDDKKDEL) shows a compositional bias: acidic residues. A Prevents secretion from ER motif is present at residues 398–401 (KDEL).

This sequence belongs to the calreticulin family.

It localises to the endoplasmic reticulum lumen. In terms of biological role, molecular calcium-binding chaperone promoting folding, oligomeric assembly and quality control in the ER via the calreticulin/calnexin cycle. This lectin may interact transiently with almost all of the monoglucosylated glycoproteins that are synthesized in the ER. The protein is Calreticulin of Euglena gracilis.